The chain runs to 259 residues: NAD kinase (259 aa).

The active-site Proton acceptor is the Asp-43. Residues 43–44 (DG), 111–112 (NE), and Arg-136 contribute to the NAD(+) site.

The protein belongs to the NAD kinase family. It depends on a divalent metal cation as a cofactor.

It localises to the cytoplasm. It carries out the reaction NAD(+) + ATP = ADP + NADP(+) + H(+). Functionally, involved in the regulation of the intracellular balance of NAD and NADP, and is a key enzyme in the biosynthesis of NADP. Catalyzes specifically the phosphorylation on 2'-hydroxyl of the adenosine moiety of NAD to yield NADP. In Mycoplasma pneumoniae (strain ATCC 29342 / M129 / Subtype 1) (Mycoplasmoides pneumoniae), this protein is NAD kinase.